The chain runs to 332 residues: 4-hydroxy-3-methylbut-2-enyl diphosphate reductase (332 aa).

Residue Cys-34 participates in [4Fe-4S] cluster binding. The (2E)-4-hydroxy-3-methylbut-2-enyl diphosphate site is built by His-63 and His-96. The dimethylallyl diphosphate site is built by His-63 and His-96. Positions 63 and 96 each coordinate isopentenyl diphosphate. Residue Cys-118 participates in [4Fe-4S] cluster binding. (2E)-4-hydroxy-3-methylbut-2-enyl diphosphate is bound at residue His-146. His-146 lines the dimethylallyl diphosphate pocket. His-146 is a binding site for isopentenyl diphosphate. Glu-148 serves as the catalytic Proton donor. Thr-186 lines the (2E)-4-hydroxy-3-methylbut-2-enyl diphosphate pocket. Residue Cys-216 coordinates [4Fe-4S] cluster. (2E)-4-hydroxy-3-methylbut-2-enyl diphosphate contacts are provided by Ser-244, Ser-245, Asn-246, and Ser-289. 4 residues coordinate dimethylallyl diphosphate: Ser-244, Ser-245, Asn-246, and Ser-289. Isopentenyl diphosphate-binding residues include Ser-244, Ser-245, Asn-246, and Ser-289.

The protein belongs to the IspH family. Requires [4Fe-4S] cluster as cofactor.

It carries out the reaction isopentenyl diphosphate + 2 oxidized [2Fe-2S]-[ferredoxin] + H2O = (2E)-4-hydroxy-3-methylbut-2-enyl diphosphate + 2 reduced [2Fe-2S]-[ferredoxin] + 2 H(+). The catalysed reaction is dimethylallyl diphosphate + 2 oxidized [2Fe-2S]-[ferredoxin] + H2O = (2E)-4-hydroxy-3-methylbut-2-enyl diphosphate + 2 reduced [2Fe-2S]-[ferredoxin] + 2 H(+). The protein operates within isoprenoid biosynthesis; dimethylallyl diphosphate biosynthesis; dimethylallyl diphosphate from (2E)-4-hydroxy-3-methylbutenyl diphosphate: step 1/1. It participates in isoprenoid biosynthesis; isopentenyl diphosphate biosynthesis via DXP pathway; isopentenyl diphosphate from 1-deoxy-D-xylulose 5-phosphate: step 6/6. In terms of biological role, catalyzes the conversion of 1-hydroxy-2-methyl-2-(E)-butenyl 4-diphosphate (HMBPP) into a mixture of isopentenyl diphosphate (IPP) and dimethylallyl diphosphate (DMAPP). Acts in the terminal step of the DOXP/MEP pathway for isoprenoid precursor biosynthesis. The protein is 4-hydroxy-3-methylbut-2-enyl diphosphate reductase of Mycobacterium leprae (strain TN).